Consider the following 573-residue polypeptide: 2-succinyl-5-enolpyruvyl-6-hydroxy-3-cyclohexene-1-carboxylate synthase (573 aa).

Belongs to the TPP enzyme family. MenD subfamily. As to quaternary structure, homodimer. The cofactor is Mg(2+). Mn(2+) serves as cofactor. Requires thiamine diphosphate as cofactor.

The enzyme catalyses isochorismate + 2-oxoglutarate + H(+) = 5-enolpyruvoyl-6-hydroxy-2-succinyl-cyclohex-3-ene-1-carboxylate + CO2. It participates in quinol/quinone metabolism; 1,4-dihydroxy-2-naphthoate biosynthesis; 1,4-dihydroxy-2-naphthoate from chorismate: step 2/7. It functions in the pathway quinol/quinone metabolism; menaquinone biosynthesis. Its function is as follows. Catalyzes the thiamine diphosphate-dependent decarboxylation of 2-oxoglutarate and the subsequent addition of the resulting succinic semialdehyde-thiamine pyrophosphate anion to isochorismate to yield 2-succinyl-5-enolpyruvyl-6-hydroxy-3-cyclohexene-1-carboxylate (SEPHCHC). The polypeptide is 2-succinyl-5-enolpyruvyl-6-hydroxy-3-cyclohexene-1-carboxylate synthase (Shewanella baltica (strain OS155 / ATCC BAA-1091)).